The following is a 1110-amino-acid chain: Sex-determining transformer protein 1 (1110 aa).

2 disordered regions span residues 1–103 (MMAP…AQQS) and 170–202 (TINGKRVGRPPGTFKRPQNNAANSSNSGNDSDM). The segment covering 44–61 (GSEDKQPGGGDVKTENDP) has biased composition (basic and acidic residues). A compositionally biased stretch (polar residues) spans 65-90 (GLGSATSNFIQSSVPPSHQTLSNPLQ). A compositionally biased stretch (low complexity) spans 188 to 201 (NNAANSSNSGNDSD). The C2H2-type 1; low DNA-binding affinity zinc-finger motif lies at 208 to 233 (LTCRWKSCNSSFQTLKALVDHVQESH). Residues 244 to 270 (WRCEWEGCDRNETFKALYMLIVHVRRH) form a C2H2-type 2; low DNA-binding affinity zinc finger. C2H2-type zinc fingers lie at residues 276-300 (NKCEYPGCGKEYSRLENLKTHRRTH), 306-331 (YKCEFADCEKAFSNASDRAKHQNRTH), and 337-362 (YSCQIPQCTKSYTDPSSLRKHIKAVH). 4 disordered regions span residues 363–397 (GDDEYEKAKKSRPANYSNRRRPDHRLAPPTGAMSH), 594–682 (EVEP…GSGE), 875–895 (RNVGGFGDEEDRNNRGHDQDR), and 1057–1110 (QEQP…RHQF). A compositionally biased stretch (low complexity) spans 597-606 (PLQQQQQQEP). Over residues 641 to 652 (GNNGDGGFGGSG) the composition is skewed to gly residues. Over residues 669–678 (PISQNGSRAS) the composition is skewed to polar residues. A compositionally biased stretch (basic and acidic residues) spans 886–895 (RNNRGHDQDR). A compositionally biased stretch (polar residues) spans 1057-1066 (QEQPTSSFSS). Over residues 1076–1086 (ALPPPPPPPAP) the composition is skewed to pro residues. Positions 1092–1103 (SADNKDDSENIP) are enriched in basic and acidic residues.

It belongs to the GLI C2H2-type zinc-finger protein family. In terms of assembly, interacts with the MX regulatory domain of tra-2. In terms of tissue distribution, expressed in intestine and gonads (at protein level).

It is found in the cytoplasm. The protein localises to the nucleus. In terms of biological role, plays a major role in controlling sexual phenotype. Terminal global regulator in a well-characterized cascade of sex-determining genes. Promotes female development. Interacts with tra-2 to promote spermatogenesis. Promotes spermatogenesis through the Tip60 HAT complex and by regulating the expression of genes, such as fog-3, required for male development. Association with chromatin and at the fog-3 promoter requires wdr-5.1, and may also require wdr-5.2. With trr-1, activates the fog-3 gene to determine sperm/oocyte cell fate. In hermaphrodites, binds to an intronic regulatory site in the ceh-30 gene, preventing ceh-30 transcription and thereby preventing survival of the CEM (cephalic male) sensory neurons. Represses the expression of the transcription factor dmd-3 in hermaphrodites to govern the timing and extent of male tail tip morphogenesis. Plays a role in controlling the sex-specific differentiation of PHC sensory neurons and represses the development of male-specific morphological features. The sequence is that of Sex-determining transformer protein 1 from Caenorhabditis elegans.